A 37-amino-acid chain; its full sequence is MKVRASVKKICRNCKVIKRNGVVRVICSEPKHKQRQG.

Belongs to the bacterial ribosomal protein bL36 family.

In Vibrio atlanticus (strain LGP32) (Vibrio splendidus (strain Mel32)), this protein is Large ribosomal subunit protein bL36.